We begin with the raw amino-acid sequence, 442 residues long: Hydroxycinnamoyltransferase 1 (442 aa).

Active-site proton acceptor residues include H159 and D389.

This sequence belongs to the plant acyltransferase family. As to expression, expressed in roots, leaves, stems and seeds.

Hydroxycinnamoyl transferase that catalyzes the transfer of an acyl from p-coumaryol-CoA to various acyl acceptors. Can use feruloyl-CoA and caffeoyl-CoA as acyl donors. The sequence is that of Hydroxycinnamoyltransferase 1 from Oryza sativa subsp. japonica (Rice).